A 156-amino-acid chain; its full sequence is Small ribosomal subunit protein uS7 (156 aa).

This sequence belongs to the universal ribosomal protein uS7 family. Part of the 30S ribosomal subunit. Contacts proteins S9 and S11.

In terms of biological role, one of the primary rRNA binding proteins, it binds directly to 16S rRNA where it nucleates assembly of the head domain of the 30S subunit. Is located at the subunit interface close to the decoding center, probably blocks exit of the E-site tRNA. In Streptococcus pyogenes serotype M3 (strain ATCC BAA-595 / MGAS315), this protein is Small ribosomal subunit protein uS7.